A 291-amino-acid chain; its full sequence is Probable plasmid-partitioning protein ParB (291 aa).

This sequence belongs to the ParB family.

The protein is Probable plasmid-partitioning protein ParB of Deinococcus radiodurans (strain ATCC 13939 / DSM 20539 / JCM 16871 / CCUG 27074 / LMG 4051 / NBRC 15346 / NCIMB 9279 / VKM B-1422 / R1).